The sequence spans 451 residues: NADH-quinone oxidoreductase subunit D (451 aa).

This sequence belongs to the complex I 49 kDa subunit family. NDH-1 is composed of 14 different subunits. Subunits NuoB, C, D, E, F, and G constitute the peripheral sector of the complex.

The protein localises to the cell membrane. It carries out the reaction a quinone + NADH + 5 H(+)(in) = a quinol + NAD(+) + 4 H(+)(out). Functionally, NDH-1 shuttles electrons from NADH, via FMN and iron-sulfur (Fe-S) centers, to quinones in the respiratory chain. The immediate electron acceptor for the enzyme in this species is believed to be a menaquinone. Couples the redox reaction to proton translocation (for every two electrons transferred, four hydrogen ions are translocated across the cytoplasmic membrane), and thus conserves the redox energy in a proton gradient. The chain is NADH-quinone oxidoreductase subunit D from Mycolicibacterium gilvum (strain PYR-GCK) (Mycobacterium gilvum (strain PYR-GCK)).